Consider the following 291-residue polypeptide: Glycine--tRNA ligase alpha subunit (291 aa).

This sequence belongs to the class-II aminoacyl-tRNA synthetase family. Tetramer of two alpha and two beta subunits.

The protein localises to the cytoplasm. The catalysed reaction is tRNA(Gly) + glycine + ATP = glycyl-tRNA(Gly) + AMP + diphosphate. In Nitratidesulfovibrio vulgaris (strain DSM 19637 / Miyazaki F) (Desulfovibrio vulgaris), this protein is Glycine--tRNA ligase alpha subunit.